Here is a 511-residue protein sequence, read N- to C-terminus: Signal transduction histidine-protein kinase/phosphatase MprB (511 aa).

Residues 1-26 (MVGFRRGPRAPLRATSSLSLRWRVML) lie on the Cytoplasmic side of the membrane. The helical transmembrane segment at 27–47 (LAMSMVAMVVVLMSFAVYAVI) threads the bilayer. The Extracellular portion of the chain corresponds to 48 to 163 (SAALYSDIDN…PTEAVMTKLR (116 aa)). A helical membrane pass occupies residues 164 to 184 (AVLLIVGGVGVAVAAVAGGMV). Over 185–511 (TRAGLRPVGR…SVDSQSARAR (327 aa)) the chain is Cytoplasmic. The HAMP domain occupies 186-238 (RAGLRPVGRLTEAAERVARTDDLRPIPVFGSDELARLTEAFNLMLRALAESRE). One can recognise a Histidine kinase domain in the interval 246–466 (DAGHELRTPL…AICMLLPGRP (221 aa)). His249 carries the phosphohistidine; by autocatalysis modification. Residues 468–511 (PDSAYPAAPDDKKTEPVDTRGANGANSRGSANVISVDSQSARAR) form a disordered region. A compositionally biased stretch (basic and acidic residues) spans 476 to 485 (PDDKKTEPVD). Polar residues predominate over residues 491–511 (GANSRGSANVISVDSQSARAR).

It depends on Mg(2+) as a cofactor. Mn(2+) serves as cofactor. Post-translationally, autophosphorylated.

Its subcellular location is the cell membrane. The catalysed reaction is ATP + protein L-histidine = ADP + protein N-phospho-L-histidine.. Functionally, member of the two-component regulatory system MprB/MprA which contributes to maintaining a balance among several systems involved in stress resistance and is required for establishment and maintenance of persistent infection in the host. In response to environmental signals MprB acts both as a membrane-associated protein kinase that undergoes autophosphorylation and subsequently transfers the phosphate to MprA, and a protein phosphatase that dephosphorylates phospho-MprA. The sequence is that of Signal transduction histidine-protein kinase/phosphatase MprB (mprB) from Mycobacterium ulcerans (strain Agy99).